We begin with the raw amino-acid sequence, 161 residues long: Lipoprotein signal peptidase (161 aa).

Transmembrane regions (helical) follow at residues 8–28, 40–60, 67–87, and 91–111; these read LKYF…KYLA, ITSF…SLLS, QMIM…YLII, and ITEK…LGNF. Catalysis depends on residues Asp-122 and Asp-140. A helical transmembrane segment spans residues 136 to 156; sequence FNIADSAITCGVVILIAASLF.

The protein belongs to the peptidase A8 family.

It localises to the cell inner membrane. The catalysed reaction is Release of signal peptides from bacterial membrane prolipoproteins. Hydrolyzes -Xaa-Yaa-Zaa-|-(S,diacylglyceryl)Cys-, in which Xaa is hydrophobic (preferably Leu), and Yaa (Ala or Ser) and Zaa (Gly or Ala) have small, neutral side chains.. Its pathway is protein modification; lipoprotein biosynthesis (signal peptide cleavage). Functionally, this protein specifically catalyzes the removal of signal peptides from prolipoproteins. This is Lipoprotein signal peptidase from Francisella tularensis subsp. tularensis (strain FSC 198).